A 543-amino-acid polypeptide reads, in one-letter code: Phosphoenolpyruvate carboxykinase (ATP) (543 aa).

244–251 (GLSGTGKT) serves as a coordination point for ATP.

Belongs to the phosphoenolpyruvate carboxykinase (ATP) family.

The enzyme catalyses oxaloacetate + ATP = phosphoenolpyruvate + ADP + CO2. The protein operates within carbohydrate biosynthesis; gluconeogenesis. The protein is Phosphoenolpyruvate carboxykinase (ATP) (PCK1) of Kluyveromyces lactis (strain ATCC 8585 / CBS 2359 / DSM 70799 / NBRC 1267 / NRRL Y-1140 / WM37) (Yeast).